The chain runs to 445 residues: 8-amino-7-oxononanoate synthase (445 aa).

Arg-40 contacts substrate. 131 to 132 (GY) contributes to the pyridoxal 5'-phosphate binding site. Residue His-156 coordinates substrate. Pyridoxal 5'-phosphate contacts are provided by Ser-202, His-230, and Thr-258. An N6-(pyridoxal phosphate)lysine modification is found at Lys-261. Thr-377 is a substrate binding site. The segment at 408-445 (ASEGQTRRDAEQPPRSLRSLPPEGAAASLGAARRETAA) is disordered.

This sequence belongs to the class-II pyridoxal-phosphate-dependent aminotransferase family. BioF subfamily. As to quaternary structure, homodimer. Pyridoxal 5'-phosphate is required as a cofactor.

The enzyme catalyses 6-carboxyhexanoyl-[ACP] + L-alanine + H(+) = (8S)-8-amino-7-oxononanoate + holo-[ACP] + CO2. The protein operates within cofactor biosynthesis; biotin biosynthesis. Its function is as follows. Catalyzes the decarboxylative condensation of pimeloyl-[acyl-carrier protein] and L-alanine to produce 8-amino-7-oxononanoate (AON), [acyl-carrier protein], and carbon dioxide. This chain is 8-amino-7-oxononanoate synthase, found in Burkholderia ambifaria (strain MC40-6).